Here is a 542-residue protein sequence, read N- to C-terminus: Putative cysteine ligase BshC (542 aa).

Residues 458–487 (VAKNAAIIQAQIEFLQQTLERALLSKHEVE) adopt a coiled-coil conformation.

This sequence belongs to the BshC family.

Functionally, involved in bacillithiol (BSH) biosynthesis. May catalyze the last step of the pathway, the addition of cysteine to glucosamine malate (GlcN-Mal) to generate BSH. This chain is Putative cysteine ligase BshC, found in Geobacillus thermodenitrificans (strain NG80-2).